We begin with the raw amino-acid sequence, 448 residues long: Probable glycine dehydrogenase (decarboxylating) subunit 1 (448 aa).

Belongs to the GcvP family. N-terminal subunit subfamily. As to quaternary structure, the glycine cleavage system is composed of four proteins: P, T, L and H. In this organism, the P 'protein' is a heterodimer of two subunits.

It catalyses the reaction N(6)-[(R)-lipoyl]-L-lysyl-[glycine-cleavage complex H protein] + glycine + H(+) = N(6)-[(R)-S(8)-aminomethyldihydrolipoyl]-L-lysyl-[glycine-cleavage complex H protein] + CO2. The glycine cleavage system catalyzes the degradation of glycine. The P protein binds the alpha-amino group of glycine through its pyridoxal phosphate cofactor; CO(2) is released and the remaining methylamine moiety is then transferred to the lipoamide cofactor of the H protein. This is Probable glycine dehydrogenase (decarboxylating) subunit 1 from Geobacillus kaustophilus (strain HTA426).